An 826-amino-acid chain; its full sequence is Ribonucleoside-diphosphate reductase large subunit (826 aa).

Substrate contacts are provided by residues Thr171, 186-187 (SC), Gly217, 387-391 (NLCAE), and 594-598 (PTSGC). Cys187 and Cys403 form a disulfide bridge. Catalysis depends on Asn387, which acts as the Proton acceptor. The active-site Cysteine radical intermediate is the Cys389. The active-site Proton acceptor is Glu391.

This sequence belongs to the ribonucleoside diphosphate reductase large chain family. Heterotetramer composed of a homodimer of the large subunit (R1) and a homodimer of the small subunit (R2). Larger multisubunit protein complex are also active, composed of (R1)n(R2)n.

The enzyme catalyses a 2'-deoxyribonucleoside 5'-diphosphate + [thioredoxin]-disulfide + H2O = a ribonucleoside 5'-diphosphate + [thioredoxin]-dithiol. Its function is as follows. Ribonucleoside-diphosphate reductase holoenzyme provides the precursors necessary for viral DNA synthesis. Allows virus growth in non-dividing cells, as well as reactivation from latency in infected hosts. Catalyzes the biosynthesis of deoxyribonucleotides from the corresponding ribonucleotides. The sequence is that of Ribonucleoside-diphosphate reductase large subunit from Epstein-Barr virus (strain GD1) (HHV-4).